The following is a 1470-amino-acid chain: ABC transporter G family member 48 (1470 aa).

The segment at 1–47 is disordered; sequence MAAAPSASGRRSMSWGSSISQSFRQAEADDPFGRAASQQGHDDDEEN. A compositionally biased stretch (polar residues) spans 9–24; the sequence is GRRSMSWGSSISQSFR. Residues 172–445 form the ABC transporter 1 domain; sequence GLIGRFGSSN…FENAGFRCPE (274 aa). 205–212 is a binding site for ATP; sequence GPPSSGKS. Residues 523 to 736 enclose the ABC transmembrane type-2 1 domain; sequence ESLRAVMSRE…SQQAISINEF (214 aa). The next 6 helical transmembrane spans lie at 541–561, 577–597, 629–649, 660–680, 686–706, and 772–792; these read FIYIFKVTQLIILAFMSMTVF, FLGALTFSLITILFNGFAELQ, VPVSLVEAAVWVVLTYYVMGF, FIAFFVTHQMAMAMFRFLGAI, VANTFGMFVLLIVFIFGGFLI, and FWISIGALIGFLVVFNILYIL. Residues 828 to 852 are disordered; sequence QIVHNNGASNTSATSSIPMSGSRST. The segment covering 832–843 has biased composition (low complexity); that stretch reads NNGASNTSATSS. Positions 869–1121 constitute an ABC transporter 2 domain; the sequence is LCFNHVNYYV…KLVEYFEAVP (253 aa). 914–921 contributes to the ATP binding site; it reads GVSGAGKT. The 215-residue stretch at 1194-1408 folds into the ABC transmembrane type-2 2 domain; it reads SQCIANFWKQ…TIYGVVASQF (215 aa). 7 helical membrane-spanning segments follow: residues 1215–1234, 1249–1271, 1301–1321, 1331–1351, 1359–1379, 1389–1409, and 1439–1459; these read AMRYLMTLLNGLVFGTVFWQ, LGATYAATFFLGAANCITVQPVV, VIYNILQGILYTIIIYAMIGY, FMFFIVASFNYFTLFGMMLVA, ANILISFVLPLWNLFAGFLVV, WYYWANPVSWTIYGVVASQFG, and FLGYVVLTHFGYIIVFFFIFG.

Belongs to the ABC transporter superfamily. ABCG family. PDR (TC 3.A.1.205) subfamily.

It is found in the membrane. Its function is as follows. May be a general defense protein. The polypeptide is ABC transporter G family member 48 (Oryza sativa subsp. japonica (Rice)).